Here is a 20-residue protein sequence, read N- to C-terminus: Trypsin inhibitor DE-3 (20 aa).

This sequence belongs to the protease inhibitor I3 (leguminous Kunitz-type inhibitor) family.

Inhibition of trypsin. The chain is Trypsin inhibitor DE-3 from Erythrina corallodendron (Coral tree).